The chain runs to 630 residues: tRNA uridine 5-carboxymethylaminomethyl modification enzyme MnmG (630 aa).

15–20 (GAGHAG) lines the FAD pocket. 274 to 288 (GPRYCPSIEDKIVRF) lines the NAD(+) pocket.

This sequence belongs to the MnmG family. In terms of assembly, homodimer. Heterotetramer of two MnmE and two MnmG subunits. FAD is required as a cofactor.

It localises to the cytoplasm. In terms of biological role, NAD-binding protein involved in the addition of a carboxymethylaminomethyl (cmnm) group at the wobble position (U34) of certain tRNAs, forming tRNA-cmnm(5)s(2)U34. In Alkaliphilus oremlandii (strain OhILAs) (Clostridium oremlandii (strain OhILAs)), this protein is tRNA uridine 5-carboxymethylaminomethyl modification enzyme MnmG.